The chain runs to 892 residues: MAVARSLRSGDSRPRTGSEIRTAFLTFFAERAHQVIPSASLVPEDPTVLLTIAGMLPFKPVFMGQAERPAPRATSSQKCIRTNDIENVGRTARHHTFFEMLGNFSFGDYFKQQAIEWAWELTTEVFGLDPKNLVVSVFREDDEAETIWRDVVGVNPKRIMRMDEADNFWASGPTGPCGPCSEIYYDFKPDLGNDDIDLEDDGRFVEFYNLVFMQYNRDGEGNLTPLANRNIDTGMGLERMAQILQGVPNNYETDIIYPLIETAAGLAGLDYQKLDEKGKTSFKVIGDHCRAITHLICDGVTASNLGRGYIMRRLLRRVVRHGRLVGIEKPFLQAMGEAAIALMVEAYPQLEERRKLILAELNREEARFLETLERGEKVLADVLVANPQMISGGQAFELYDTYGFPLELTQEIAEEHGLTVDLQGFEQAMDQQRQRAKAAAVSIDLTLQGAIEQMAAELEATRFQGYEVLEQPCCVLALVVNGESAERASAGDSVQIVLDTTPFYGESGGQVGDHGVLSGEGSGGNGVIVTVDDVSRHRNVFVHFGRIERGTLALGDLVNAQVDRACRRRAQANHTATHLLQAALKQVVDSGIGQAGSLVDFDRLRFDFHCARAVTAKELEQIEALINGWIMESHDLIVEEMSIQEAKAAGAVAMFGEKYADVVRVVDVPGVSMELCGGTHVANTAEIGLFKIVAESSVAAGIRRIEAVAGPAVLAYLNERDEVVKKLLERLKVQPSEIVERVTSLQEELKSSQKALTAARAELAVAKSAALATQAVAVGEYQLLVARLDGVEGAGLQNAAQGLLDQLGDGAAVVLGGLPDPSDEGKVILVAAFGKQLIAQGQQAGKFIGSIAKRCGGGGGGRPNLAQAGGRDGAALDGALEAAKVDLQQALG.

4 residues coordinate Zn(2+): His574, His578, Cys676, and His680.

The protein belongs to the class-II aminoacyl-tRNA synthetase family. Requires Zn(2+) as cofactor.

It is found in the cytoplasm. It carries out the reaction tRNA(Ala) + L-alanine + ATP = L-alanyl-tRNA(Ala) + AMP + diphosphate. Functionally, catalyzes the attachment of alanine to tRNA(Ala) in a two-step reaction: alanine is first activated by ATP to form Ala-AMP and then transferred to the acceptor end of tRNA(Ala). Also edits incorrectly charged Ser-tRNA(Ala) and Gly-tRNA(Ala) via its editing domain. The sequence is that of Alanine--tRNA ligase from Prochlorococcus marinus (strain MIT 9313).